Consider the following 370-residue polypeptide: Histidinol-phosphate aminotransferase (370 aa).

Lys222 carries the N6-(pyridoxal phosphate)lysine modification.

The protein belongs to the class-II pyridoxal-phosphate-dependent aminotransferase family. Histidinol-phosphate aminotransferase subfamily. As to quaternary structure, homodimer. The cofactor is pyridoxal 5'-phosphate.

The catalysed reaction is L-histidinol phosphate + 2-oxoglutarate = 3-(imidazol-4-yl)-2-oxopropyl phosphate + L-glutamate. The protein operates within amino-acid biosynthesis; L-histidine biosynthesis; L-histidine from 5-phospho-alpha-D-ribose 1-diphosphate: step 7/9. This chain is Histidinol-phosphate aminotransferase, found in Bacillus cytotoxicus (strain DSM 22905 / CIP 110041 / 391-98 / NVH 391-98).